Consider the following 448-residue polypeptide: UDP-N-acetylmuramoylalanine--D-glutamate ligase (448 aa).

112–118 (GSNAKST) contributes to the ATP binding site.

It belongs to the MurCDEF family.

Its subcellular location is the cytoplasm. The enzyme catalyses UDP-N-acetyl-alpha-D-muramoyl-L-alanine + D-glutamate + ATP = UDP-N-acetyl-alpha-D-muramoyl-L-alanyl-D-glutamate + ADP + phosphate + H(+). It functions in the pathway cell wall biogenesis; peptidoglycan biosynthesis. Cell wall formation. Catalyzes the addition of glutamate to the nucleotide precursor UDP-N-acetylmuramoyl-L-alanine (UMA). The protein is UDP-N-acetylmuramoylalanine--D-glutamate ligase of Acinetobacter baumannii (strain ACICU).